A 304-amino-acid chain; its full sequence is tRNA dimethylallyltransferase (304 aa).

10-17 is an ATP binding site; sequence GPTASGKT. 12–17 is a substrate binding site; that stretch reads TASGKT. Interaction with substrate tRNA regions lie at residues 35–38, 159–163, and 240–245; these read DSAL, QRLSR, and RCVGYR.

Belongs to the IPP transferase family. In terms of assembly, monomer. Mg(2+) serves as cofactor.

It catalyses the reaction adenosine(37) in tRNA + dimethylallyl diphosphate = N(6)-dimethylallyladenosine(37) in tRNA + diphosphate. Catalyzes the transfer of a dimethylallyl group onto the adenine at position 37 in tRNAs that read codons beginning with uridine, leading to the formation of N6-(dimethylallyl)adenosine (i(6)A). The protein is tRNA dimethylallyltransferase of Shewanella sp. (strain W3-18-1).